A 213-amino-acid polypeptide reads, in one-letter code: Peroxisomal protein 2 (213 aa).

The Peroxisomal target signal 1 (PTS1) motif lies at Glu211–Leu213.

The protein belongs to the PXP2 family.

The protein resides in the peroxisome matrix. It is found in the cytoplasm. The protein localises to the cytosol. Its subcellular location is the nucleus. In terms of biological role, probably involved in peroxisome formation or maintenance as well as in amino acid metabolism. This is Peroxisomal protein 2 from Schizosaccharomyces pombe (strain 972 / ATCC 24843) (Fission yeast).